A 121-amino-acid chain; its full sequence is MTLEDECKQLMVCRDEIKKLKLKEKEAKNRILTYLKNHNQYGVIFKHNKKQISITVETTPVKKNPSLKEKQTKIQDILSGVGVANPDATTQEIIDGLKTTTITDTSNQKDVLKLKMGKRAG.

Residues Lys8–Asn37 are a coiled coil.

This is an uncharacterized protein from Aedes vexans (Inland floodwater mosquito).